Consider the following 189-residue polypeptide: MNASSRTKPAIDLNKVPPIDHHRTAVTFNCLIMKMTEMLNNFGNKMEDILEKAEQSLDTADRKLRLMESKLAGMSLEDKSTTATPSSAPEIDEIHESNPSSSQIVEETVEEKPEEHTTTVLIKDDPAYSKYFKMLKLGVLEAGVIQKMKSEGVDPSILKRGDEPSRPQAQTSRNYESSGESTASFSDSD.

Residues 35–74 (MTEMLNNFGNKMEDILEKAEQSLDTADRKLRLMESKLAGM) adopt a coiled-coil conformation. 2 disordered regions span residues 76-101 (LEDKSTTATPSSAPEIDEIHESNPSS) and 150-189 (SEGVDPSILKRGDEPSRPQAQTSRNYESSGESTASFSDSD). Over residues 150 to 165 (SEGVDPSILKRGDEPS) the composition is skewed to basic and acidic residues. Residues 167–189 (PQAQTSRNYESSGESTASFSDSD) show a composition bias toward polar residues. Threonine 182 bears the Phosphothreonine mark.

This sequence belongs to the CCDC53 family. In terms of assembly, probable component of the WASH complex. Component of the DHIC (ddl-1-containing hsf-1 inhibitory complex), which contains at least ddl-1, ddl-2, hsb-1 and hsf-1. Within the complex, interacts with ddl-2. Within the complex, interacts with hsb-1. Within the complex, interacts with hsf-1. Formation of the DHIC may be dependent upon the Insulin/IGF-1-like signaling (IIS) mediated pathway. Post-translationally, phosphorylated. Phosphorylation on Thr-182 may promote DHIC complex dissociation and consequently the activation of heat-shock transcription factor hsf-1. Phosphorylation is modulated by the Insulin/IGF-1-like signaling (IIS) mediated pathway. As to expression, expressed in pharynx, intestine, body wall muscles, vulva muscles, spermatheca, and several head and tail neurons.

Its function is as follows. Acts as a component of the WASH core complex that functions as a nucleation-promoting factor (NPF) at the surface of endosomes, where it recruits and activates the Arp2/3 complex to induce actin polymerization, playing a key role in the fission of tubules that serve as transport intermediates during endosome sorting. Acts as a component of the DHIC (ddl-1-containing hsf-1 inhibitory complex) which modulates lifespan by sequestering the heat-shock transcription factor hsf-1 to negatively regulate its binding to DNA and its transcriptional activity. The polypeptide is WASH complex subunit homolog 3 (ddl-1) (Caenorhabditis elegans).